The primary structure comprises 236 residues: LexA repressor (236 aa).

Positions 26–46 (FDEMKEALDLASKSGIHRLIT) form a DNA-binding region, H-T-H motif. Positions 84–107 (SPSVIEGGQGRSSPAPRPAANNDD) are disordered. Residues S157 and K195 each act as for autocatalytic cleavage activity in the active site.

The protein belongs to the peptidase S24 family. As to quaternary structure, homodimer.

The enzyme catalyses Hydrolysis of Ala-|-Gly bond in repressor LexA.. Represses a number of genes involved in the response to DNA damage (SOS response), including recA and lexA. In the presence of single-stranded DNA, RecA interacts with LexA causing an autocatalytic cleavage which disrupts the DNA-binding part of LexA, leading to derepression of the SOS regulon and eventually DNA repair. The protein is LexA repressor of Chelativorans sp. (strain BNC1).